The sequence spans 461 residues: Nuclear distribution protein PAC1 (461 aa).

Residues 9-41 form the LisH domain; the sequence is QAEELHKSIIAYLTANNLLNTANTLRAELNLSE. 7 WD repeats span residues 114–155, 157–197, 201–248, 251–290, 312–355, 357–396, and 401–457; these read SHRD…RTIK, HTRA…KNIR, GHDH…CVRT, GHTA…PESK, QYLS…LMTL, GHDN…KCIK, and AHER…MKLR.

It belongs to the WD repeat LIS1/nudF family. As to quaternary structure, self-associates. Interacts with NDL1 and dynein.

It is found in the cytoplasm. The protein resides in the cytoskeleton. The protein localises to the spindle pole. In terms of biological role, positively regulates the activity of the minus-end directed microtubule motor protein dynein. May enhance dynein-mediated microtubule sliding by targeting dynein to the microtubule plus end. Required for nuclear migration during vegetative growth as well as development. Required for retrograde early endosome (EE) transport from the hyphal tip. Required for localization of dynein to the mitotic spindle poles. Recruits additional proteins to the dynein complex at SPBs. The polypeptide is Nuclear distribution protein PAC1 (Arthroderma otae (strain ATCC MYA-4605 / CBS 113480) (Microsporum canis)).